Reading from the N-terminus, the 130-residue chain is uncharacterized protein (130 aa).

The tract at residues D41 to E64 is disordered.

This is an uncharacterized protein from Streptococcus pyogenes serotype M6 (strain ATCC BAA-946 / MGAS10394).